The chain runs to 660 residues: Protein NEDD1 (660 aa).

WD repeat units follow at residues 1 to 31 (MQENLRFASSGDDIKIWDASSMTLVDKFNPH), 32 to 71 (TSPHGISSICWSSNNNFLVTASSSGDKIVVSSCKCKPVPL), 75 to 114 (AEGQKQTCVNLNSTSMYLVSGGLNNTVNIWDLKSKRVHRS), 117 to 156 (DHKDQVTCVTYNWNDCYIASGSLSGEIILHSVTTNLSSTP), 160 to 200 (GSNQ…PYHN), 204 to 244 (VHKA…LVKT), 246 to 285 (VADTPLTAVDFMPDGATLAIGSSRGKIYQYDLRMLKSPVK), and 289 to 332 (AHKT…NAAS). Serine 325 is subject to Phosphoserine. The disordered stretch occupies residues 369–411 (QEKAGLPRSINTDTLSKETDSGKNQDFSSFDDTGKSSLGDMFS). Phosphothreonine; by PLK1 is present on threonine 382. The residue at position 397 (serine 397) is a Phosphoserine; by PLK1. Serine 411 is modified (phosphoserine). Serine 426 is subject to Phosphoserine; by PLK1. Phosphoserine occurs at positions 468 and 516. The span at 507-523 (GAESGNLNTSPSSNQTR) shows a compositional bias: polar residues. Residues 507 to 532 (GAESGNLNTSPSSNQTRNSEKFEKPE) form a disordered region. Residue threonine 550 is modified to Phosphothreonine; by CDK1. The residue at position 637 (serine 637) is a Phosphoserine; by PLK1.

Interacts with FAM29A. Interacts with HSPA1A and HSPA1B. Interacts with gamma-tubulin in a HSPA1A/B-dependent manner. In terms of processing, during mitosis, prior phosphorylation on Thr-550 by CDK1 promotes subsequent phosphorylation by PLK1 on Thr-382, Ser-397, Ser-426 and Ser-637. Phosphorylated NEDD1 can interact with gamma-tubulin for targeting the gamma-tubulin ring complex (gTuRC) to the centrosome, an important step for spindle formation.

Its subcellular location is the cytoplasm. The protein resides in the cytoskeleton. It localises to the microtubule organizing center. It is found in the centrosome. Functionally, required for mitosis progression. Promotes the nucleation of microtubules from the spindle. The protein is Protein NEDD1 (NEDD1) of Homo sapiens (Human).